We begin with the raw amino-acid sequence, 959 residues long: Bifunctional premutilin synthase (959 aa).

The interval 1–542 (MGLSEDLHAR…ALNVPIPRFD (542 aa)) is class II diterpene cyclase. The short motif at 309–312 (DADM) is the DXDD motif element. Asp311 functions as the For class II diterpene cyclase activity in the catalytic mechanism. The class I diterpene synthase stretch occupies residues 543-959 (PSSISTLPAI…TANGSNGIHH (417 aa)). Catalysis depends on Asp649, which acts as the For class I diterpene synthase activity. 3 residues coordinate Mg(2+): Asp649, Asp653, and Asn824. Positions 649 to 653 (DDYLD) match the DDXXD motif motif. Residues 931-959 (KGTNGVKKINGSSTNGTKVTANGSNGIHH) are disordered. Residues 940–959 (NGSSTNGTKVTANGSNGIHH) are compositionally biased toward polar residues.

It belongs to the terpene synthase family. Mg(2+) serves as cofactor.

The protein operates within secondary metabolite biosynthesis; terpenoid biosynthesis. In terms of biological role, bifunctional premutilin synthase; part of the gene cluster that mediates the biosynthesis of pleuromutilin, a tricyclic diterpene showing antibacterial properties. The geranylgeranyl diphosphate (GGPP) synthase catalyzes the first step in pleuromutilin biosynthesis. GGPP is then substrate of the premutilin synthase (PS) to yield premutilin. Premutilin synthase is a bifunctional enzyme composed of the fusion of a class II diterpene cyclase (DTC) and a class I diterpene synthase (DTS), with the corresponding domains and active sites containing characteristic aspartate-rich motifs. GGPP is first converted to mutildienyl-diphosphate (MPP) at the class II DTC site. MPP is subsequently further cyclized at the class I DTS site, followed by a 1,5-hydride shift and addition of water prior to terminating deprotonation, to yield premutilin. In addition to the aforementioned GGPP synthase and bifunctional diterpene synthase, the cluster also contains three cytochrome P450 monooxygenases, a short-chain alcohol dehydrogenase, and an acyltransferase, involved in the conversion of premutilin to pleuromutilin. The cytochrome P450 monooxygenases P450-1 and P450-2 hydroxylate premutilin at C-11 and C-3, respectively, producing 11-hydroxypremutilin and 3-hydroxypremutilin. The combination of the actions of both ple5 and ple6 leads to the production of 3,11-dihydroxypremutilin. The short chain dehydrogenase SDR further converts 3,11-dihydroxypremutilin into mutilin. The acetyltransferase ATF then acetylates mutilin to produce 14-O-acetylmutilin. Finally, the cytochrome P450 monooxygenase P450-3 catalyzes hydroxylation on the alpha position of the acetyl side chain of 14-O-acetylmutilin to yield pleuromutilin. In Clitopilus passeckerianus (Pleurotus passeckerianus), this protein is Bifunctional premutilin synthase.